Consider the following 142-residue polypeptide: Nucleoside diphosphate kinase (142 aa).

Lysine 11, phenylalanine 59, arginine 87, threonine 93, arginine 104, and asparagine 114 together coordinate ATP. Histidine 117 acts as the Pros-phosphohistidine intermediate in catalysis.

It belongs to the NDK family. Homotetramer. It depends on Mg(2+) as a cofactor.

The protein localises to the cytoplasm. The catalysed reaction is a 2'-deoxyribonucleoside 5'-diphosphate + ATP = a 2'-deoxyribonucleoside 5'-triphosphate + ADP. It catalyses the reaction a ribonucleoside 5'-diphosphate + ATP = a ribonucleoside 5'-triphosphate + ADP. Functionally, major role in the synthesis of nucleoside triphosphates other than ATP. The ATP gamma phosphate is transferred to the NDP beta phosphate via a ping-pong mechanism, using a phosphorylated active-site intermediate. In Pectobacterium atrosepticum (strain SCRI 1043 / ATCC BAA-672) (Erwinia carotovora subsp. atroseptica), this protein is Nucleoside diphosphate kinase.